Reading from the N-terminus, the 153-residue chain is Endoribonuclease YbeY (153 aa).

3 residues coordinate Zn(2+): H114, H118, and H124.

The protein belongs to the endoribonuclease YbeY family. The cofactor is Zn(2+).

It localises to the cytoplasm. In terms of biological role, single strand-specific metallo-endoribonuclease involved in late-stage 70S ribosome quality control and in maturation of the 3' terminus of the 16S rRNA. This chain is Endoribonuclease YbeY, found in Nitrosococcus oceani (strain ATCC 19707 / BCRC 17464 / JCM 30415 / NCIMB 11848 / C-107).